A 142-amino-acid polypeptide reads, in one-letter code: Large ribosomal subunit protein uL13 (142 aa).

The protein belongs to the universal ribosomal protein uL13 family. In terms of assembly, part of the 50S ribosomal subunit.

In terms of biological role, this protein is one of the early assembly proteins of the 50S ribosomal subunit, although it is not seen to bind rRNA by itself. It is important during the early stages of 50S assembly. This Saccharophagus degradans (strain 2-40 / ATCC 43961 / DSM 17024) protein is Large ribosomal subunit protein uL13.